Here is a 737-residue protein sequence, read N- to C-terminus: Ribosome-releasing factor 2, mitochondrial (737 aa).

A mitochondrion-targeting transit peptide spans 1–29; that stretch reads MLKYALHSGGMPRNRLLRQLSAHIFRRSY. Residues 31–310 enclose the tr-type G domain; that stretch reads SNIRNIGILA…AVNTYLPAPE (280 aa). GTP-binding positions include 40–47, 104–108, and 158–161; these read AHIDAGKT, DTPGH, and NKMD.

The protein belongs to the TRAFAC class translation factor GTPase superfamily. Classic translation factor GTPase family. EF-G/EF-2 subfamily.

The protein resides in the mitochondrion. Mitochondrial GTPase that mediates the disassembly of ribosomes from messenger RNA at the termination of mitochondrial protein biosynthesis. Not involved in the GTP-dependent ribosomal translocation step during translation elongation. This is Ribosome-releasing factor 2, mitochondrial from Drosophila pseudoobscura pseudoobscura (Fruit fly).